The following is a 459-amino-acid chain: Phosphoglucosamine mutase (459 aa).

Serine 102 serves as the catalytic Phosphoserine intermediate. Mg(2+)-binding residues include serine 102, aspartate 243, aspartate 245, and aspartate 247. A Phosphoserine modification is found at serine 102.

It belongs to the phosphohexose mutase family. Mg(2+) is required as a cofactor. Activated by phosphorylation.

It carries out the reaction alpha-D-glucosamine 1-phosphate = D-glucosamine 6-phosphate. Catalyzes the conversion of glucosamine-6-phosphate to glucosamine-1-phosphate. In Bartonella quintana (strain Toulouse) (Rochalimaea quintana), this protein is Phosphoglucosamine mutase.